Reading from the N-terminus, the 504-residue chain is Maturase K (504 aa).

Belongs to the intron maturase 2 family. MatK subfamily.

It localises to the plastid. The protein resides in the chloroplast. Functionally, usually encoded in the trnK tRNA gene intron. Probably assists in splicing its own and other chloroplast group II introns. This is Maturase K from Aruncus dioicus (Goat's beard).